The primary structure comprises 398 residues: Glutamyl-tRNA reductase (398 aa).

Substrate-binding positions include 45-48 (TCNR), Ser-88, 93-95 (EDQ), and Gln-99. Cys-46 functions as the Nucleophile in the catalytic mechanism. Residue 168–173 (GAGKMG) coordinates NADP(+).

Belongs to the glutamyl-tRNA reductase family. In terms of assembly, homodimer.

The catalysed reaction is (S)-4-amino-5-oxopentanoate + tRNA(Glu) + NADP(+) = L-glutamyl-tRNA(Glu) + NADPH + H(+). Its pathway is porphyrin-containing compound metabolism; protoporphyrin-IX biosynthesis; 5-aminolevulinate from L-glutamyl-tRNA(Glu): step 1/2. In terms of biological role, catalyzes the NADPH-dependent reduction of glutamyl-tRNA(Glu) to glutamate 1-semialdehyde (GSA). The chain is Glutamyl-tRNA reductase (hemA) from Methanothermobacter marburgensis (strain ATCC BAA-927 / DSM 2133 / JCM 14651 / NBRC 100331 / OCM 82 / Marburg) (Methanobacterium thermoautotrophicum).